The chain runs to 276 residues: Adenylyl-sulfate kinase 1, chloroplastic (276 aa).

Residues 1 to 38 (MIAAGAKSLLGLSMASPKGIFDSNSMSNSRSVVVVRAC) constitute a chloroplast transit peptide. Residues 46–74 (TLSHNKNGSIPEVKSINGHTGQKQGPLST) are disordered. The segment covering 62–74 (NGHTGQKQGPLST) has biased composition (polar residues). 108–116 (GLSGSGKST) is a binding site for ATP. Substrate contacts are provided by residues Asp-138, Arg-141, Arg-155, Asn-158, 181 to 182 (IS), and Gly-231. Ser-182 serves as the catalytic Phosphoserine intermediate.

This sequence belongs to the APS kinase family. As to quaternary structure, homodimer; disulfide-linked. Interacts with APK2. As to expression, expressed in root vasculature, root tips, leaf epidermal and guard cells, pollen grains and funiculus of developing seeds.

Its subcellular location is the plastid. It is found in the chloroplast. It carries out the reaction adenosine 5'-phosphosulfate + ATP = 3'-phosphoadenylyl sulfate + ADP + H(+). It participates in sulfur metabolism; hydrogen sulfide biosynthesis; sulfite from sulfate: step 2/3. Its function is as follows. Catalyzes the synthesis of activated sulfate. Essential for plant reproduction and viability. Required for the production of glucosinolates. In Arabidopsis thaliana (Mouse-ear cress), this protein is Adenylyl-sulfate kinase 1, chloroplastic (APK1).